The primary structure comprises 335 residues: Trans-3-hydroxy-L-proline dehydratase (335 aa).

Residue Cys-91 is the Proton acceptor of the active site. Residues 92-93, His-222, and 256-257 each bind substrate; these read GH and GS.

It belongs to the proline racemase family. In terms of assembly, homodimer.

The catalysed reaction is trans-3-hydroxy-L-proline = 1-pyrroline-2-carboxylate + H2O. Functionally, catalyzes the dehydration of trans-3-hydroxy-L-proline (t3LHyp) to Delta(1)-pyrroline-2-carboxylate (Pyr2C). Does not possess neither proline racemase nor 4-hydroxyproline 2-epimerase activities. The protein is Trans-3-hydroxy-L-proline dehydratase of Burkholderia cenocepacia (strain HI2424).